The sequence spans 141 residues: Large ribosomal subunit protein uL11 (141 aa).

Belongs to the universal ribosomal protein uL11 family. Part of the ribosomal stalk of the 50S ribosomal subunit. Interacts with L10 and the large rRNA to form the base of the stalk. L10 forms an elongated spine to which L12 dimers bind in a sequential fashion forming a multimeric L10(L12)X complex. Post-translationally, one or more lysine residues are methylated.

Forms part of the ribosomal stalk which helps the ribosome interact with GTP-bound translation factors. The chain is Large ribosomal subunit protein uL11 from Chlamydia trachomatis serovar L2 (strain ATCC VR-902B / DSM 19102 / 434/Bu).